Consider the following 439-residue polypeptide: F-box/FBD/LRR-repeat protein At5g56570 (439 aa).

An F-box domain is found at Pro-35–Phe-81. LRR repeat units lie at residues Cys-155–Leu-177 and Val-223–Ile-246. The 51-residue stretch at Val-361 to Thr-411 folds into the FBD domain.

The protein is F-box/FBD/LRR-repeat protein At5g56570 of Arabidopsis thaliana (Mouse-ear cress).